The sequence spans 123 residues: Ribosome-binding factor A (123 aa).

This sequence belongs to the RbfA family. As to quaternary structure, monomer. Binds 30S ribosomal subunits, but not 50S ribosomal subunits or 70S ribosomes.

Its subcellular location is the cytoplasm. Its function is as follows. One of several proteins that assist in the late maturation steps of the functional core of the 30S ribosomal subunit. Associates with free 30S ribosomal subunits (but not with 30S subunits that are part of 70S ribosomes or polysomes). Required for efficient processing of 16S rRNA. May interact with the 5'-terminal helix region of 16S rRNA. This chain is Ribosome-binding factor A, found in Dechloromonas aromatica (strain RCB).